A 727-amino-acid polypeptide reads, in one-letter code: Two-component response regulator-like APRR7 (727 aa).

The disordered stretch occupies residues 1 to 47 (MNANEEGEGSRYPITDRKTGETKFDRVESRTEKHSEEEKTNGITMDV). Basic and acidic residues predominate over residues 14–40 (ITDRKTGETKFDRVESRTEKHSEEEKT). The Response regulatory domain maps to 79 to 197 (RVLLVENDDC…ELKILWQHVW (119 aa)). Disordered stretches follow at residues 203–265 (SSGS…KKAV), 291–312 (NPEF…QEHD), 339–416 (KDEP…KTLD), 464–487 (SRYN…SLQD), 509–560 (ESLP…QPLP), and 606–670 (VNGS…SQRE). The span at 246–259 (ASDGSSDGSGAQSS) shows a compositional bias: low complexity. 3 stretches are compositionally biased toward polar residues: residues 344 to 353 (SKTTGIMRQD), 467 to 487 (NPAS…SLQD), and 519 to 535 (VGSN…NNAF). Over residues 538–555 (PGAPKVSSAGSSSVKHSS) the composition is skewed to low complexity. Residues 641–657 (GKNGNGDGSGSGSGSGS) show a composition bias toward gly residues. The CCT domain occupies 669–711 (REAALTKFRQKRKERCFRKKVRYQSRKKLAEQRPRVRGQFVRK).

The protein belongs to the ARR-like family. Post-translationally, phosphorylated. Phosphorylation varies throughout the diurnal cycle.

Its subcellular location is the nucleus. Its function is as follows. Transcriptional repressor of CCA1 and LHY, and positive regulator of LWD1 and LWD2 expression. Represses the expression of other clock proteins and master regulators of plant growth, development and response to abiotic stress. Involved in the positive and negative feedback loops of the circadian clock. Controls photoperiodic flowering response and temperature compensation. Expression of several members of the ARR-like family is controlled by circadian rhythm. APRR9, APRR7, and APRR5 coordinately act on the upstream region of the target genes to repress their expression from noon until midnight. The particular coordinated sequential expression of APRR9, APRR7, APRR5, APRR3 and APPR1 result to circadian waves that may be at the basis of the endogenous circadian clock. The protein is Two-component response regulator-like APRR7 (APRR7) of Arabidopsis thaliana (Mouse-ear cress).